The sequence spans 256 residues: Triosephosphate isomerase (256 aa).

Residue Asn10–Lys12 coordinates substrate. The active-site Electrophile is the His99. Catalysis depends on Glu171, which acts as the Proton acceptor. Residues Gly177, Ser216, and Gly237–Gly238 contribute to the substrate site.

It belongs to the triosephosphate isomerase family. Homodimer.

It localises to the cytoplasm. The enzyme catalyses D-glyceraldehyde 3-phosphate = dihydroxyacetone phosphate. It participates in carbohydrate biosynthesis; gluconeogenesis. The protein operates within carbohydrate degradation; glycolysis; D-glyceraldehyde 3-phosphate from glycerone phosphate: step 1/1. In terms of biological role, involved in the gluconeogenesis. Catalyzes stereospecifically the conversion of dihydroxyacetone phosphate (DHAP) to D-glyceraldehyde-3-phosphate (G3P). The chain is Triosephosphate isomerase from Colwellia psychrerythraea (strain 34H / ATCC BAA-681) (Vibrio psychroerythus).